Consider the following 260-residue polypeptide: Triosephosphate isomerase (260 aa).

11-13 serves as a coordination point for substrate; the sequence is NWK. The Electrophile role is filled by H103. E175 functions as the Proton acceptor in the catalytic mechanism. Substrate contacts are provided by residues G181, S220, and 241-242; that span reads GG.

The protein belongs to the triosephosphate isomerase family. As to quaternary structure, homodimer.

It is found in the cytoplasm. It carries out the reaction D-glyceraldehyde 3-phosphate = dihydroxyacetone phosphate. Its pathway is carbohydrate biosynthesis; gluconeogenesis. It functions in the pathway carbohydrate degradation; glycolysis; D-glyceraldehyde 3-phosphate from glycerone phosphate: step 1/1. Its function is as follows. Involved in the gluconeogenesis. Catalyzes stereospecifically the conversion of dihydroxyacetone phosphate (DHAP) to D-glyceraldehyde-3-phosphate (G3P). The polypeptide is Triosephosphate isomerase (Shewanella amazonensis (strain ATCC BAA-1098 / SB2B)).